The following is a 692-amino-acid chain: Elongation factor G (692 aa).

The tr-type G domain maps to 8–282 (EKTRNIGIMA…AVLDYLPAPT (275 aa)). GTP is bound by residues 17-24 (AHIDAGKT), 81-85 (DTPGH), and 135-138 (NKMD).

Belongs to the TRAFAC class translation factor GTPase superfamily. Classic translation factor GTPase family. EF-G/EF-2 subfamily.

The protein localises to the cytoplasm. Its function is as follows. Catalyzes the GTP-dependent ribosomal translocation step during translation elongation. During this step, the ribosome changes from the pre-translocational (PRE) to the post-translocational (POST) state as the newly formed A-site-bound peptidyl-tRNA and P-site-bound deacylated tRNA move to the P and E sites, respectively. Catalyzes the coordinated movement of the two tRNA molecules, the mRNA and conformational changes in the ribosome. The sequence is that of Elongation factor G from Bacillus velezensis (strain DSM 23117 / BGSC 10A6 / LMG 26770 / FZB42) (Bacillus amyloliquefaciens subsp. plantarum).